The following is a 302-amino-acid chain: 33 kDa chaperonin (302 aa).

Intrachain disulfides connect Cys-255-Cys-257 and Cys-288-Cys-291.

This sequence belongs to the HSP33 family. Post-translationally, under oxidizing conditions two disulfide bonds are formed involving the reactive cysteines. Under reducing conditions zinc is bound to the reactive cysteines and the protein is inactive.

The protein localises to the cytoplasm. Functionally, redox regulated molecular chaperone. Protects both thermally unfolding and oxidatively damaged proteins from irreversible aggregation. Plays an important role in the bacterial defense system toward oxidative stress. The polypeptide is 33 kDa chaperonin (Caulobacter vibrioides (strain ATCC 19089 / CIP 103742 / CB 15) (Caulobacter crescentus)).